Reading from the N-terminus, the 203-residue chain is Translation machinery-associated protein 16 (203 aa).

The interval 1-39 (MPKAPKGKSAGREKKVIHPYSRKAAQITREAHKQEKKEK) is disordered. An ADP-ribosylserine modification is found at Ser-9. Over residues 29–39 (REAHKQEKKEK) the composition is skewed to basic and acidic residues.

This sequence belongs to the TMA16 family. Associates with pre-60S ribosomal particles.

It is found in the nucleus. Its function is as follows. Involved in the biogenesis of the 60S ribosomal subunit in the nucleus. This Homo sapiens (Human) protein is Translation machinery-associated protein 16 (TMA16).